Reading from the N-terminus, the 106-residue chain is UPF0145 protein MA_3383 (106 aa).

This sequence belongs to the UPF0145 family.

The chain is UPF0145 protein MA_3383 from Methanosarcina acetivorans (strain ATCC 35395 / DSM 2834 / JCM 12185 / C2A).